Consider the following 400-residue polypeptide: NADH-quinone oxidoreductase subunit D (400 aa).

This sequence belongs to the complex I 49 kDa subunit family. NDH-1 is composed of 14 different subunits. Subunits NuoB, C, D, E, F, and G constitute the peripheral sector of the complex.

It is found in the cell inner membrane. The enzyme catalyses a quinone + NADH + 5 H(+)(in) = a quinol + NAD(+) + 4 H(+)(out). In terms of biological role, NDH-1 shuttles electrons from NADH, via FMN and iron-sulfur (Fe-S) centers, to quinones in the respiratory chain. The immediate electron acceptor for the enzyme in this species is believed to be a menaquinone. Couples the redox reaction to proton translocation (for every two electrons transferred, four hydrogen ions are translocated across the cytoplasmic membrane), and thus conserves the redox energy in a proton gradient. The chain is NADH-quinone oxidoreductase subunit D from Chlorobium chlorochromatii (strain CaD3).